The primary structure comprises 307 residues: Pseudouridine-5'-phosphate glycosidase (307 aa).

Glutamate 26 serves as the catalytic Proton donor. Substrate-binding residues include lysine 88 and valine 108. Residue aspartate 140 coordinates Mn(2+). Residue 142 to 144 coordinates substrate; it reads SAD. Catalysis depends on lysine 161, which acts as the Nucleophile.

This sequence belongs to the pseudouridine-5'-phosphate glycosidase family. Homotrimer. Requires Mn(2+) as cofactor.

It catalyses the reaction D-ribose 5-phosphate + uracil = psi-UMP + H2O. Functionally, catalyzes the reversible cleavage of pseudouridine 5'-phosphate (PsiMP) to ribose 5-phosphate and uracil. Functions biologically in the cleavage direction, as part of a pseudouridine degradation pathway. The sequence is that of Pseudouridine-5'-phosphate glycosidase from Clostridium botulinum (strain Langeland / NCTC 10281 / Type F).